The chain runs to 203 residues: CS5 fimbrial subunit (203 aa).

Positions methionine 1–alanine 22 are cleaved as a signal peptide.

It is found in the fimbrium. In terms of biological role, major subunit of fimbriae. Fimbriae (also called pili), are polar filaments radiating from the surface of the bacterium to a length of 0.5-1.5 micrometers and numbering 100-300 per cell. They enable bacteria to colonize the epithelium of specific host organs. This chain is CS5 fimbrial subunit, found in Escherichia coli.